We begin with the raw amino-acid sequence, 319 residues long: MKRIGVLTSGGDSPGMNAAVRAVVRKAIYHNVEVYGIYNGYSGLINGKIEKLEIGSVGDIIHRGGTKLYTARCPEFKTVEGREKGIENLKKFGIEGLVVIGGDGSFMGAKKLTELGFPCVGVPGTIDNDIPGTDFTIGFDTALNTVIDAIDKIRDTATSHERTYVVEVMGRHAGDIALWSGLAGGAESILIPEADYDMDEIIARLRRGHERGKKHSIIIVAEGVGSGVEFGKRIEEETSLETRVSVLGHIQRGGSPSAFDRVLASRLGAYAVELLLEGKGGRCVGIQSNELVHHDILDILDKKHTVDQNMYRLSQELSI.

Gly-11 contacts ATP. Position 21 to 25 (21 to 25 (RAVVR)) interacts with ADP. Residues 72–73 (RC) and 102–105 (GDGS) each bind ATP. Asp-103 contacts Mg(2+). 125-127 (TID) contributes to the substrate binding site. Asp-127 acts as the Proton acceptor in catalysis. Position 154 (Arg-154) interacts with ADP. Substrate-binding positions include Arg-162 and 169-171 (MGR). Residues 185–187 (GAE), Arg-211, and 213–215 (KKH) contribute to the ADP site. Substrate contacts are provided by residues Glu-222, Arg-243, and 249–252 (HIQR).

It belongs to the phosphofructokinase type A (PFKA) family. ATP-dependent PFK group I subfamily. Prokaryotic clade 'B1' sub-subfamily. As to quaternary structure, homotetramer. Mg(2+) is required as a cofactor.

It localises to the cytoplasm. It carries out the reaction beta-D-fructose 6-phosphate + ATP = beta-D-fructose 1,6-bisphosphate + ADP + H(+). It participates in carbohydrate degradation; glycolysis; D-glyceraldehyde 3-phosphate and glycerone phosphate from D-glucose: step 3/4. With respect to regulation, allosterically activated by ADP and other diphosphonucleosides, and allosterically inhibited by phosphoenolpyruvate. In terms of biological role, catalyzes the phosphorylation of D-fructose 6-phosphate to fructose 1,6-bisphosphate by ATP, the first committing step of glycolysis. This Bacillus pumilus (strain SAFR-032) protein is ATP-dependent 6-phosphofructokinase.